Consider the following 397-residue polypeptide: DNA-directed RNA polymerase subunit Rpo1C (397 aa).

This sequence belongs to the RNA polymerase beta' chain family. Part of the RNA polymerase complex.

It is found in the cytoplasm. The catalysed reaction is RNA(n) + a ribonucleoside 5'-triphosphate = RNA(n+1) + diphosphate. Functionally, DNA-dependent RNA polymerase (RNAP) catalyzes the transcription of DNA into RNA using the four ribonucleoside triphosphates as substrates. Forms part of the jaw domain. The protein is DNA-directed RNA polymerase subunit Rpo1C of Methanococcus aeolicus (strain ATCC BAA-1280 / DSM 17508 / OCM 812 / Nankai-3).